The sequence spans 338 residues: Inositol 2-dehydrogenase (338 aa).

It belongs to the Gfo/Idh/MocA family. Homotetramer.

It catalyses the reaction myo-inositol + NAD(+) = scyllo-inosose + NADH + H(+). In terms of biological role, involved in the oxidation of myo-inositol (MI) to 2-keto-myo-inositol (2KMI or 2-inosose). The sequence is that of Inositol 2-dehydrogenase from Azotobacter vinelandii (strain DJ / ATCC BAA-1303).